The sequence spans 554 residues: Glucose-6-phosphate isomerase (554 aa).

Catalysis depends on glutamate 358, which acts as the Proton donor. Active-site residues include histidine 389 and lysine 515. Residues 527–540 (ANNSPAPQSDSSTD) are compositionally biased toward polar residues. The segment at 527–554 (ANNSPAPQSDSSTDALVRRYRSERGRTS) is disordered. The span at 542–554 (LVRRYRSERGRTS) shows a compositional bias: basic and acidic residues.

It belongs to the GPI family.

It is found in the cytoplasm. The enzyme catalyses alpha-D-glucose 6-phosphate = beta-D-fructose 6-phosphate. It participates in carbohydrate biosynthesis; gluconeogenesis. It functions in the pathway carbohydrate degradation; glycolysis; D-glyceraldehyde 3-phosphate and glycerone phosphate from D-glucose: step 2/4. In terms of biological role, catalyzes the reversible isomerization of glucose-6-phosphate to fructose-6-phosphate. The chain is Glucose-6-phosphate isomerase from Mycolicibacterium paratuberculosis (strain ATCC BAA-968 / K-10) (Mycobacterium paratuberculosis).